The chain runs to 279 residues: Tryptophan 2,3-dioxygenase (279 aa).

Residues F48–H52, Y110, and R114 each bind substrate. H237 lines the heme pocket. T251 is a binding site for substrate.

It belongs to the tryptophan 2,3-dioxygenase family. As to quaternary structure, homotetramer. It depends on heme as a cofactor.

The enzyme catalyses L-tryptophan + O2 = N-formyl-L-kynurenine. It participates in amino-acid degradation; L-tryptophan degradation via kynurenine pathway; L-kynurenine from L-tryptophan: step 1/2. Functionally, heme-dependent dioxygenase that catalyzes the oxidative cleavage of the L-tryptophan (L-Trp) pyrrole ring and converts L-tryptophan to N-formyl-L-kynurenine. Catalyzes the oxidative cleavage of the indole moiety. This Bradyrhizobium sp. (strain ORS 278) protein is Tryptophan 2,3-dioxygenase.